Reading from the N-terminus, the 236-residue chain is 2-C-methyl-D-erythritol 4-phosphate cytidylyltransferase (236 aa).

Belongs to the IspD/TarI cytidylyltransferase family. IspD subfamily. As to quaternary structure, homodimer.

The catalysed reaction is 2-C-methyl-D-erythritol 4-phosphate + CTP + H(+) = 4-CDP-2-C-methyl-D-erythritol + diphosphate. It functions in the pathway isoprenoid biosynthesis; isopentenyl diphosphate biosynthesis via DXP pathway; isopentenyl diphosphate from 1-deoxy-D-xylulose 5-phosphate: step 2/6. Its function is as follows. Catalyzes the formation of 4-diphosphocytidyl-2-C-methyl-D-erythritol from CTP and 2-C-methyl-D-erythritol 4-phosphate (MEP). This is 2-C-methyl-D-erythritol 4-phosphate cytidylyltransferase from Escherichia coli O139:H28 (strain E24377A / ETEC).